We begin with the raw amino-acid sequence, 115 residues long: MKTIIVFLSLLVLATKFGDAKEGVNQKQKKEVTQNEFREEYLNEMAAMSLVQQLEAIERALFENEAGRNSRQKRCLGENVPCGDNIPCCGKLSCEKTFGYPWWYKSPYCVKPSSG.

Residues 1–20 form the signal peptide; the sequence is MKTIIVFLSLLVLATKFGDA. A propeptide spanning residues 21–74 is cleaved from the precursor; that stretch reads KEGVNQKQKKEVTQNEFREEYLNEMAAMSLVQQLEAIERALFENEAGRNSRQKR. 3 disulfides stabilise this stretch: Cys-75-Cys-89, Cys-82-Cys-94, and Cys-88-Cys-109.

The protein belongs to the neurotoxin 14 (magi-1) family. 03 (ICK-30-40) subfamily. Expressed by the venom gland.

The protein localises to the secreted. Ion channel inhibitor. This is U17-barytoxin-Tl1c from Trittame loki (Brush-footed trapdoor spider).